A 281-amino-acid chain; its full sequence is BEN domain-containing protein 6 (281 aa).

2 disordered regions span residues 15 to 62 (VLRK…ETPL) and 143 to 172 (SFAS…PGEK). Residues 19-99 (RKRKRTETAN…RLRQSLVMLQ (81 aa)) are a coiled coil. Positions 143–160 (SFASLCSNSNSTSSSPSS) are enriched in low complexity. The segment covering 162-172 (KAEEEQHPGEK) has biased composition (basic and acidic residues). The 101-residue stretch at 171 to 271 (EKQFTIERWQ…NCTKKPNASK (101 aa)) folds into the BEN domain.

Interacts (via BEN domain) with RBPJ.

It localises to the nucleus. Acts as a corepressor of recombining binding protein suppressor hairless (RBPJ) and inhibits Notch signaling in neural stem cells, thereby opposing their self-renewal and promoting neurogenesis. The polypeptide is BEN domain-containing protein 6 (Bend6) (Mus musculus (Mouse)).